The chain runs to 284 residues: MTAPLSLGWPAPAKLNLFLHINARRHDGYHELQTLFQFVEHCDYLDFKVLDKPELKLHSNLAGVVADSDNLILKAAKSLQQHTKCQFGVEIWLDKRLPMGGGLGGGSSDAATTLVALNQLWETGLSATELCELGLKLGADVPVFINGFSAFAEGVGEKLQNVEPAEPWYLVLVPQVHVSTAEVFQDPELPRNTPKLSLESLMNSPWQNDCQSLVAKRHPQVAKTLGWLLEYAPSRMTGTGACVFGQFEQEQEAKDVLAKLPASIQGFVAKGANISPLMLRLAQC.

Residue Lys-14 is part of the active site. Pro-98–Ser-108 is an ATP binding site. Residue Asp-140 is part of the active site.

Belongs to the GHMP kinase family. IspE subfamily.

The catalysed reaction is 4-CDP-2-C-methyl-D-erythritol + ATP = 4-CDP-2-C-methyl-D-erythritol 2-phosphate + ADP + H(+). It participates in isoprenoid biosynthesis; isopentenyl diphosphate biosynthesis via DXP pathway; isopentenyl diphosphate from 1-deoxy-D-xylulose 5-phosphate: step 3/6. Its function is as follows. Catalyzes the phosphorylation of the position 2 hydroxy group of 4-diphosphocytidyl-2C-methyl-D-erythritol. In Shewanella halifaxensis (strain HAW-EB4), this protein is 4-diphosphocytidyl-2-C-methyl-D-erythritol kinase.